A 141-amino-acid chain; its full sequence is HTH-type transcriptional repressor NsrR (141 aa).

An HTH rrf2-type domain is found at Gln2–Glu129. A DNA-binding region (H-T-H motif) is located at residues Ile28–Arg51. Cys91, Cys96, and Cys102 together coordinate [2Fe-2S] cluster.

Requires [2Fe-2S] cluster as cofactor.

Its function is as follows. Nitric oxide-sensitive repressor of genes involved in protecting the cell against nitrosative stress. May require iron for activity. The protein is HTH-type transcriptional repressor NsrR of Escherichia fergusonii (strain ATCC 35469 / DSM 13698 / CCUG 18766 / IAM 14443 / JCM 21226 / LMG 7866 / NBRC 102419 / NCTC 12128 / CDC 0568-73).